The chain runs to 259 residues: 4-hydroxy-tetrahydrodipicolinate reductase (259 aa).

NAD(+) contacts are provided by residues 9 to 14 (GAGGRM) and E35. An NADP(+)-binding site is contributed by R36. NAD(+)-binding positions include 92 to 94 (GTT) and 116 to 119 (APNM). The active-site Proton donor/acceptor is the H149. H150 lines the (S)-2,3,4,5-tetrahydrodipicolinate pocket. The active-site Proton donor is the K153. A (S)-2,3,4,5-tetrahydrodipicolinate-binding site is contributed by 159 to 160 (GT).

The protein belongs to the DapB family.

The protein resides in the cytoplasm. The catalysed reaction is (S)-2,3,4,5-tetrahydrodipicolinate + NAD(+) + H2O = (2S,4S)-4-hydroxy-2,3,4,5-tetrahydrodipicolinate + NADH + H(+). It carries out the reaction (S)-2,3,4,5-tetrahydrodipicolinate + NADP(+) + H2O = (2S,4S)-4-hydroxy-2,3,4,5-tetrahydrodipicolinate + NADPH + H(+). It participates in amino-acid biosynthesis; L-lysine biosynthesis via DAP pathway; (S)-tetrahydrodipicolinate from L-aspartate: step 4/4. Catalyzes the conversion of 4-hydroxy-tetrahydrodipicolinate (HTPA) to tetrahydrodipicolinate. The protein is 4-hydroxy-tetrahydrodipicolinate reductase of Nitratidesulfovibrio vulgaris (strain DSM 19637 / Miyazaki F) (Desulfovibrio vulgaris).